The primary structure comprises 376 residues: 23S rRNA (uracil(747)-C(5))-methyltransferase RlmC (376 aa).

The [4Fe-4S] cluster site is built by Cys-3, Cys-11, Cys-14, and Cys-88. Residues Gln-213, Phe-242, Glu-263, and Asn-308 each coordinate S-adenosyl-L-methionine. Cys-335 functions as the Nucleophile in the catalytic mechanism.

It belongs to the class I-like SAM-binding methyltransferase superfamily. RNA M5U methyltransferase family. RlmC subfamily.

The catalysed reaction is uridine(747) in 23S rRNA + S-adenosyl-L-methionine = 5-methyluridine(747) in 23S rRNA + S-adenosyl-L-homocysteine + H(+). Catalyzes the formation of 5-methyl-uridine at position 747 (m5U747) in 23S rRNA. The polypeptide is 23S rRNA (uracil(747)-C(5))-methyltransferase RlmC (Vibrio vulnificus (strain CMCP6)).